Here is a 372-residue protein sequence, read N- to C-terminus: Cytochrome b (372 aa).

4 helical membrane-spanning segments follow: residues 25–45, 69–90, 105–125, and 170–190; these read FGSM…FLAI, WMMQ…YIHI, WLSG…GYVL, and FFAL…IHIM. Heme b-binding residues include histidine 75 and histidine 89. The heme b site is built by histidine 174 and histidine 188. Histidine 193 lines the a ubiquinone pocket. Helical transmembrane passes span 218 to 238, 280 to 300, 312 to 332, and 339 to 358; these read HKDM…MSFT, LGGT…PFTH, LMQF…WAAT, and FTSI…TMNP.

Belongs to the cytochrome b family. The cytochrome bc1 complex contains 3 respiratory subunits (MT-CYB, CYC1 and UQCRFS1), 2 core proteins (UQCRC1 and UQCRC2) and probably 6 low-molecular weight proteins. Heme b serves as cofactor.

Its subcellular location is the mitochondrion inner membrane. Its function is as follows. Component of the ubiquinol-cytochrome c reductase complex (complex III or cytochrome b-c1 complex) that is part of the mitochondrial respiratory chain. The b-c1 complex mediates electron transfer from ubiquinol to cytochrome c. Contributes to the generation of a proton gradient across the mitochondrial membrane that is then used for ATP synthesis. This Pantherophis vulpinus (Western fox snake) protein is Cytochrome b (MT-CYB).